The chain runs to 135 residues: S-protein homolog 20 (135 aa).

Positions 1–26 are cleaved as a signal peptide; it reads MNGSSAFHIILSVTFMVFLFGGLCEA. Residue N88 is glycosylated (N-linked (GlcNAc...) asparagine).

This sequence belongs to the plant self-incompatibility (S1) protein family.

It localises to the secreted. In Arabidopsis thaliana (Mouse-ear cress), this protein is S-protein homolog 20.